The chain runs to 557 residues: Urocanate hydratase (557 aa).

The interval 1–20 (MSNPRHNEREVRSPRGDELN) is disordered. NAD(+)-binding positions include 52–53 (GG), Gln130, 176–178 (GMG), Glu196, Arg201, 242–243 (NA), 263–267 (QTSAH), 273–274 (YL), and Tyr322. The active site involves Cys410. Gly492 provides a ligand contact to NAD(+).

It belongs to the urocanase family. NAD(+) is required as a cofactor.

It is found in the cytoplasm. It catalyses the reaction 4-imidazolone-5-propanoate = trans-urocanate + H2O. It functions in the pathway amino-acid degradation; L-histidine degradation into L-glutamate; N-formimidoyl-L-glutamate from L-histidine: step 2/3. Its function is as follows. Catalyzes the conversion of urocanate to 4-imidazolone-5-propionate. This Brucella canis (strain ATCC 23365 / NCTC 10854 / RM-666) protein is Urocanate hydratase.